Consider the following 147-residue polypeptide: Hemoglobin subunit beta (147 aa).

The Globin domain maps to 3-147; sequence HWSCEEKQFI…VAHALALGYH (145 aa). Positions 64 and 93 each coordinate heme b.

The protein belongs to the globin family. As to quaternary structure, heterotetramer of two alpha-D chains and two beta chains. As to expression, red blood cells.

Involved in oxygen transport from the lung to the various peripheral tissues. This is Hemoglobin subunit beta (HBB) from Chelonoidis carbonarius (Red-footed tortoise).